The chain runs to 430 residues: UDP-N-acetylglucosamine 1-carboxyvinyltransferase (430 aa).

22 to 23 (KN) contacts phosphoenolpyruvate. Arginine 102 is a binding site for UDP-N-acetyl-alpha-D-glucosamine. Residue cysteine 126 is the Proton donor of the active site. The residue at position 126 (cysteine 126) is a 2-(S-cysteinyl)pyruvic acid O-phosphothioketal. Residues 131–135 (RPVDL), 172–175 (KVSV), aspartate 317, and isoleucine 339 contribute to the UDP-N-acetyl-alpha-D-glucosamine site.

The protein belongs to the EPSP synthase family. MurA subfamily.

The protein localises to the cytoplasm. It catalyses the reaction phosphoenolpyruvate + UDP-N-acetyl-alpha-D-glucosamine = UDP-N-acetyl-3-O-(1-carboxyvinyl)-alpha-D-glucosamine + phosphate. The protein operates within cell wall biogenesis; peptidoglycan biosynthesis. Its function is as follows. Cell wall formation. Adds enolpyruvyl to UDP-N-acetylglucosamine. The sequence is that of UDP-N-acetylglucosamine 1-carboxyvinyltransferase from Rhizobium leguminosarum bv. trifolii (strain WSM2304).